A 488-amino-acid polypeptide reads, in one-letter code: Cytochrome P450 monooxygenase orf2 (488 aa).

Residues 7 to 27 (LPGIFLPLAGCVLALSLTTIV) form a helical membrane-spanning segment. Cys432 contacts heme.

Belongs to the cytochrome P450 family. Heme serves as cofactor.

It is found in the membrane. It participates in secondary metabolite biosynthesis. In terms of biological role, cytochrome P450 monooxygenase; part of the gene cluster that mediates the biosynthesis of nigerpyrone and its derivatives carbonarone A and pestalamide A. The biosynthesis pathway begins with the polyketide assembly by epaA to form phenylacetyl triketide precursor from successive condensation of two malonyl-CoA, presumably with one phenylacetyl-CoA starter unit produced by the phenylacetyl-CoA ligase epaB. For the nigerpyrone biosynthesis, the reactive polyketide chain is released as an aldehyde through the R-domain. A nonenzymatic cyclization and dehydration may create nigerpyrone. For the biosynthesis of carbonarone A and pestalamide A, an extra methyl group is added through the C-methyltransferase domain. Several further steps involving the dehydrogenase orf1, the cytochrome P450 monooxygenase orf2 and the FAD-dependent monooxygenase orf3 are required to form a carbonarone A precursor which is converted to carbonarone A via cyclization. The O-acetyltransferase epaC could catalyze the transfer of 2-methylsuccinyl-CoA, a common intermediate in the ethylmalonyl-CoA pathway, to generate the final product pestalamide A. The sequence is that of Cytochrome P450 monooxygenase orf2 from Aspergillus niger (strain ATCC MYA-4892 / CBS 513.88 / FGSC A1513).